The chain runs to 152 residues: Regulatory protein RecX (152 aa).

It belongs to the RecX family.

The protein resides in the cytoplasm. Modulates RecA activity. The polypeptide is Regulatory protein RecX (Haemophilus influenzae (strain 86-028NP)).